A 432-amino-acid chain; its full sequence is UDP-N-acetylglucosamine 1-carboxyvinyltransferase (432 aa).

22–23 (KN) provides a ligand contact to phosphoenolpyruvate. Residue R102 participates in UDP-N-acetyl-alpha-D-glucosamine binding. The Proton donor role is filled by C126. At C126 the chain carries 2-(S-cysteinyl)pyruvic acid O-phosphothioketal. UDP-N-acetyl-alpha-D-glucosamine contacts are provided by residues 131 to 135 (RPVDL), D317, and I339.

This sequence belongs to the EPSP synthase family. MurA subfamily.

Its subcellular location is the cytoplasm. It catalyses the reaction phosphoenolpyruvate + UDP-N-acetyl-alpha-D-glucosamine = UDP-N-acetyl-3-O-(1-carboxyvinyl)-alpha-D-glucosamine + phosphate. It participates in cell wall biogenesis; peptidoglycan biosynthesis. In terms of biological role, cell wall formation. Adds enolpyruvyl to UDP-N-acetylglucosamine. The sequence is that of UDP-N-acetylglucosamine 1-carboxyvinyltransferase from Rhodospirillum centenum (strain ATCC 51521 / SW).